Here is a 412-residue protein sequence, read N- to C-terminus: Mast cell carboxypeptidase A (412 aa).

An N-terminal signal peptide occupies residues 1–10; it reads LMGVIYSTLA. The propeptide at 11–104 is activation peptide; the sequence is IAPVQFDREK…IDKQFDVKEE (94 aa). In terms of domain architecture, Peptidase M14 spans 113-407; sequence KYNDWNKIVS…LSVKFIAKYI (295 aa). Cystine bridges form between cysteine 168–cysteine 181 and cysteine 240–cysteine 263. Zn(2+)-binding residues include histidine 171 and glutamate 174. A Zn(2+)-binding site is contributed by histidine 299. The active-site Proton donor/acceptor is glutamate 373.

This sequence belongs to the peptidase M14 family. It depends on Zn(2+) as a cofactor.

It localises to the cytoplasmic vesicle. The protein localises to the secretory vesicle. The catalysed reaction is Release of a C-terminal amino acid, but little or no action with -Asp, -Glu, -Arg, -Lys or -Pro.. This is Mast cell carboxypeptidase A (Cpa3) from Rattus norvegicus (Rat).